The sequence spans 240 residues: Probable transcriptional regulator ycf27 (240 aa).

The region spanning 5 to 118 (KILVIDDEAS…ELEARIRSVL (114 aa)) is the Response regulatory domain. Residue D54 is modified to 4-aspartylphosphate. The H-T-H motif DNA-binding region spans 74–92 (DVPIIMLTALSDVSDRITG). The segment at residues 133–234 (SGIINIGFLK…ARGTGYLFQR (102 aa)) is a DNA-binding region (ompR/PhoB-type).

The protein resides in the plastid. The protein localises to the chloroplast. Its function is as follows. Probable promoter-specific protein mediating the interaction between DNA and RNA polymerase. This is Probable transcriptional regulator ycf27 (ycf27) from Porphyridium aerugineum (Red microalga).